We begin with the raw amino-acid sequence, 270 residues long: tRNA pseudouridine synthase A (270 aa).

Asp-60 functions as the Nucleophile in the catalytic mechanism. The RNA binding stretch occupies residues 107–111 (FHARF). Tyr-118 contacts substrate. The tract at residues 168–172 (QCQSR) is interaction with tRNA.

It belongs to the tRNA pseudouridine synthase TruA family. Homodimer.

The enzyme catalyses uridine(38/39/40) in tRNA = pseudouridine(38/39/40) in tRNA. Functionally, formation of pseudouridine at positions 38, 39 and 40 in the anticodon stem and loop of transfer RNAs. The chain is tRNA pseudouridine synthase A from Escherichia coli (strain 55989 / EAEC).